We begin with the raw amino-acid sequence, 510 residues long: 2,3-bisphosphoglycerate-independent phosphoglycerate mutase (510 aa).

Residues aspartate 13 and serine 63 each coordinate Mn(2+). Serine 63 functions as the Phosphoserine intermediate in the catalytic mechanism. Substrate-binding positions include histidine 124, 154 to 155 (RD), arginine 186, arginine 192, 262 to 265 (RADR), and lysine 334. Positions 401, 405, 442, 443, and 461 each coordinate Mn(2+).

It belongs to the BPG-independent phosphoglycerate mutase family. Monomer. The cofactor is Mn(2+).

The enzyme catalyses (2R)-2-phosphoglycerate = (2R)-3-phosphoglycerate. It functions in the pathway carbohydrate degradation; glycolysis; pyruvate from D-glyceraldehyde 3-phosphate: step 3/5. In terms of biological role, catalyzes the interconversion of 2-phosphoglycerate and 3-phosphoglycerate. The protein is 2,3-bisphosphoglycerate-independent phosphoglycerate mutase of Aliivibrio fischeri (strain MJ11) (Vibrio fischeri).